The sequence spans 360 residues: MTTTLQQRGSASLWEKFCQWITSTENRIYVGWFGVLMIPTLLTATTCFIIAFIAAPPVDIDGIREPVAGSLLYGNNIVSGAVVPSSNAIGLHFYPIWEAASLDEWLYNGGPYQLVIFHFLIGVFCYMGREWELSYRLGMRPWICVAFSAPVAAATAVFLIYPIGQGSFSDGMPLGISGTFNFMIVFQAEHNILMHPFHMLGVAGVFGGSLFSAMHGSLVTSSLVRETTETESQNYGYKFGQEEETYNIVAAHGYFGRLIFQYASFNNSRSLHFFLGAWPVVGIWFTALGVSTMAFNLNGFNFNQSILDSQGRVINTWADILNRANLGFEVMHERNAHNFPLDLAAGEQAPVALQAPAING.

A run of 3 helical transmembrane segments spans residues 29–46 (YVGW…TATT), 118–133 (HFLI…EWEL), and 142–156 (WICV…AATA). H118 contributes to the chlorophyll a binding site. Residue Y126 coordinates pheophytin a. The [CaMn4O5] cluster site is built by D170 and E189. The helical transmembrane segment at 197-218 (FHMLGVAGVFGGSLFSAMHGSL) threads the bilayer. H198 lines the chlorophyll a pocket. A quinone-binding positions include H215 and 264-265 (SF). H215 contributes to the Fe cation binding site. H272 provides a ligand contact to Fe cation. Residues 274-288 (FLGAWPVVGIWFTAL) traverse the membrane as a helical segment. [CaMn4O5] cluster is bound by residues H332, E333, D342, and A344. The propeptide occupies 345–360 (AGEQAPVALQAPAING).

This sequence belongs to the reaction center PufL/M/PsbA/D family. PSII is composed of 1 copy each of membrane proteins PsbA, PsbB, PsbC, PsbD, PsbE, PsbF, PsbH, PsbI, PsbJ, PsbK, PsbL, PsbM, PsbT, PsbX, PsbY, PsbZ, Psb30/Ycf12, peripheral proteins PsbO, CyanoQ (PsbQ), PsbU, PsbV and a large number of cofactors. It forms dimeric complexes. Requires The D1/D2 heterodimer binds P680, chlorophylls that are the primary electron donor of PSII, and subsequent electron acceptors. It shares a non-heme iron and each subunit binds pheophytin, quinone, additional chlorophylls, carotenoids and lipids. D1 provides most of the ligands for the Mn4-Ca-O5 cluster of the oxygen-evolving complex (OEC). There is also a Cl(-1) ion associated with D1 and D2, which is required for oxygen evolution. The PSII complex binds additional chlorophylls, carotenoids and specific lipids. as cofactor. Post-translationally, tyr-161 forms a radical intermediate that is referred to as redox-active TyrZ, YZ or Y-Z. In terms of processing, C-terminally processed by CtpA; processing is essential to allow assembly of the oxygen-evolving complex and thus photosynthetic growth.

The protein resides in the cellular thylakoid membrane. It carries out the reaction 2 a plastoquinone + 4 hnu + 2 H2O = 2 a plastoquinol + O2. In terms of biological role, photosystem II (PSII) is a light-driven water:plastoquinone oxidoreductase that uses light energy to abstract electrons from H(2)O, generating O(2) and a proton gradient subsequently used for ATP formation. It consists of a core antenna complex that captures photons, and an electron transfer chain that converts photonic excitation into a charge separation. The D1/D2 (PsbA/PsbD) reaction center heterodimer binds P680, the primary electron donor of PSII as well as several subsequent electron acceptors. This chain is Photosystem II protein D1 2, found in Picosynechococcus sp. (strain ATCC 27264 / PCC 7002 / PR-6) (Agmenellum quadruplicatum).